We begin with the raw amino-acid sequence, 258 residues long: 4,5-dihydroxyphthalate decarboxylase (258 aa).

It to P.testosteroni DHP decarboxylase.

It carries out the reaction 4,5-dihydroxyphthalate + H(+) = 3,4-dihydroxybenzoate + CO2. It functions in the pathway xenobiotic degradation; phthalate degradation; 3,4-dihydroxybenzoate from phthalate: step 3/3. The sequence is that of 4,5-dihydroxyphthalate decarboxylase (pht5) from Pseudomonas putida (Arthrobacter siderocapsulatus).